Here is a 158-residue protein sequence, read N- to C-terminus: 2-C-methyl-D-erythritol 2,4-cyclodiphosphate synthase (158 aa).

Asp9 and His11 together coordinate a divalent metal cation. 4-CDP-2-C-methyl-D-erythritol 2-phosphate contacts are provided by residues 9–11 (DVH) and 35–36 (HS). His43 is an a divalent metal cation binding site. 4-CDP-2-C-methyl-D-erythritol 2-phosphate contacts are provided by residues 57–59 (DIG), 62–66 (FPDTD), 101–107 (AQKPKMA), 133–136 (TTTE), Phe140, and Arg143.

This sequence belongs to the IspF family. As to quaternary structure, homotrimer. The cofactor is a divalent metal cation.

It carries out the reaction 4-CDP-2-C-methyl-D-erythritol 2-phosphate = 2-C-methyl-D-erythritol 2,4-cyclic diphosphate + CMP. Its pathway is isoprenoid biosynthesis; isopentenyl diphosphate biosynthesis via DXP pathway; isopentenyl diphosphate from 1-deoxy-D-xylulose 5-phosphate: step 4/6. Involved in the biosynthesis of isopentenyl diphosphate (IPP) and dimethylallyl diphosphate (DMAPP), two major building blocks of isoprenoid compounds. Catalyzes the conversion of 4-diphosphocytidyl-2-C-methyl-D-erythritol 2-phosphate (CDP-ME2P) to 2-C-methyl-D-erythritol 2,4-cyclodiphosphate (ME-CPP) with a corresponding release of cytidine 5-monophosphate (CMP). The sequence is that of 2-C-methyl-D-erythritol 2,4-cyclodiphosphate synthase from Bacillus cytotoxicus (strain DSM 22905 / CIP 110041 / 391-98 / NVH 391-98).